A 233-amino-acid polypeptide reads, in one-letter code: Small ribosomal subunit protein uS3 (233 aa).

Positions 39–107 (VRQFLMKTLE…PVQINISEVR (69 aa)) constitute a KH type-2 domain.

The protein belongs to the universal ribosomal protein uS3 family. As to quaternary structure, part of the 30S ribosomal subunit. Forms a tight complex with proteins S10 and S14.

Functionally, binds the lower part of the 30S subunit head. Binds mRNA in the 70S ribosome, positioning it for translation. The protein is Small ribosomal subunit protein uS3 of Buchnera aphidicola subsp. Acyrthosiphon pisum (strain 5A).